A 183-amino-acid polypeptide reads, in one-letter code: Large ribosomal subunit protein uL13m (183 aa).

Belongs to the universal ribosomal protein uL13 family. In terms of assembly, component of the mitochondrial large ribosomal subunit (mt-LSU). Mature N.crassa 74S mitochondrial ribosomes consist of a small (37S) and a large (54S) subunit. The 37S small subunit contains a 16S ribosomal RNA (16S mt-rRNA) and 32 different proteins. The 54S large subunit contains a 23S rRNA (23S mt-rRNA) and 42 different proteins.

It localises to the mitochondrion. Functionally, component of the mitochondrial ribosome (mitoribosome), a dedicated translation machinery responsible for the synthesis of mitochondrial genome-encoded proteins, including at least some of the essential transmembrane subunits of the mitochondrial respiratory chain. The mitoribosomes are attached to the mitochondrial inner membrane and translation products are cotranslationally integrated into the membrane. The polypeptide is Large ribosomal subunit protein uL13m (mrpl23) (Neurospora crassa (strain ATCC 24698 / 74-OR23-1A / CBS 708.71 / DSM 1257 / FGSC 987)).